The following is a 235-amino-acid chain: Heme oxygenase (235 aa).

Residue His19 coordinates heme b.

Belongs to the heme oxygenase family.

The protein localises to the plastid. Its subcellular location is the chloroplast. The enzyme catalyses heme b + 3 reduced [NADPH--hemoprotein reductase] + 3 O2 = biliverdin IXalpha + CO + Fe(2+) + 3 oxidized [NADPH--hemoprotein reductase] + 3 H2O + H(+). Functionally, catalyzes the opening of the heme ring with the release of iron. Key enzyme in the synthesis of the chromophoric part of the photosynthetic antennae. In Rhodella violacea (Red alga), this protein is Heme oxygenase (pbsA).